Reading from the N-terminus, the 208-residue chain is MKGLFVTIEGPEGSGKTTLIQGLLPYFEQKEQKVMATREPGGIAISEEIRTILHKQEYTMMEARTEALLYAAARRQHLVEKVMPALNKDYLVLCDRFIDSSLAYQGYARGLGMDKVFEINRFATEDCMPSLTIYLDIEPEVGLARIAKDAGREVNRLDMEDISFHKRVREGYLQVVERFSDRIVLVNADQPMEKLIEEVIQVIEDKLL.

10–17 (GPEGSGKT) contacts ATP.

Belongs to the thymidylate kinase family.

The catalysed reaction is dTMP + ATP = dTDP + ADP. Its function is as follows. Phosphorylation of dTMP to form dTDP in both de novo and salvage pathways of dTTP synthesis. In Bacillus cereus (strain Q1), this protein is Thymidylate kinase.